The sequence spans 522 residues: Peptide methionine sulfoxide reductase MsrA/MsrB (522 aa).

The region spanning 17–174 (LALGACSPKI…ALALIRNPNA (158 aa)) is the Thioredoxin domain. Cys68 and Cys71 are joined by a disulfide. The peptide methionine sulfoxide reductase A stretch occupies residues 199 to 354 (RTIYLAGGCF…PNGYCHIDIR (156 aa)). Cys207 is an active-site residue. Residues 383 to 506 (DAELKRTLTE…NGASLKFIPL (124 aa)) form the MsrB domain. Cys440 and Cys495 are oxidised to a cystine. Cys495 (nucleophile) is an active-site residue.

In the N-terminal section; belongs to the thioredoxin family. This sequence in the central section; belongs to the MsrA Met sulfoxide reductase family. It in the C-terminal section; belongs to the MsrB Met sulfoxide reductase family.

The catalysed reaction is L-methionyl-[protein] + [thioredoxin]-disulfide + H2O = L-methionyl-(S)-S-oxide-[protein] + [thioredoxin]-dithiol. It catalyses the reaction [thioredoxin]-disulfide + L-methionine + H2O = L-methionine (S)-S-oxide + [thioredoxin]-dithiol. The enzyme catalyses L-methionyl-[protein] + [thioredoxin]-disulfide + H2O = L-methionyl-(R)-S-oxide-[protein] + [thioredoxin]-dithiol. Has an important function as a repair enzyme for proteins that have been inactivated by oxidation. Catalyzes the reversible oxidation-reduction of methionine sulfoxide in proteins to methionine. This is Peptide methionine sulfoxide reductase MsrA/MsrB (msrAB) from Neisseria gonorrhoeae.